The primary structure comprises 81 residues: MNRPVHNEHRRKRFAKKCPFVSAGWKTIDYKDVVTLKRFITERGKILPRRITGVSSRFQALLAQAVKRARHVGLLPFVGED.

The protein belongs to the bacterial ribosomal protein bS18 family. As to quaternary structure, part of the 30S ribosomal subunit. Forms a tight heterodimer with protein bS6.

In terms of biological role, binds as a heterodimer with protein bS6 to the central domain of the 16S rRNA, where it helps stabilize the platform of the 30S subunit. The sequence is that of Small ribosomal subunit protein bS18 from Chlamydia muridarum (strain MoPn / Nigg).